A 944-amino-acid chain; its full sequence is Protein phosphatase 1 regulatory subunit 37 homolog (944 aa).

The interval 42–71 (QQQSHSAATSVRKKTCQDANSSGEDPNGRI) is disordered. LRR repeat units follow at residues 203–224 (SCVRLNLSFNKQIDMRGWTTIF), 232–255 (SLQMLNLRYTNLNDRSIPALCKMA), 262–282 (SLTCLHLENTQMSGKNLLVLI), 290–311 (GLRELYLGDNGLQPTDGSHIYQ), and 318–338 (SLQLLDLRNNSIGDSGVRHIC). The tract at residues 517–598 (EEGDSGVEKK…KERHQRFVRS (82 aa)) is disordered. Residues 522-542 (GVEKKDGNECEGEDNKDRQDT) are compositionally biased toward basic and acidic residues. 2 stretches are compositionally biased toward polar residues: residues 543–554 (PAETENGVSSNE) and 567–585 (PESNNNEKSPLMASSSTSK). The segment covering 586 to 595 (LSRKERHQRF) has biased composition (basic residues).

It belongs to the PPP1R37 family.

The polypeptide is Protein phosphatase 1 regulatory subunit 37 homolog (Caenorhabditis elegans).